The chain runs to 275 residues: Large ribosomal subunit protein uL2 (275 aa).

Residues 210-275 (GRNRHRGIRP…DKLIISRKKK (66 aa)) are disordered. Positions 257–275 (FKTRKKKASDKLIISRKKK) are enriched in basic residues.

This sequence belongs to the universal ribosomal protein uL2 family. As to quaternary structure, part of the 50S ribosomal subunit. Forms a bridge to the 30S subunit in the 70S ribosome.

Its function is as follows. One of the primary rRNA binding proteins. Required for association of the 30S and 50S subunits to form the 70S ribosome, for tRNA binding and peptide bond formation. It has been suggested to have peptidyltransferase activity; this is somewhat controversial. Makes several contacts with the 16S rRNA in the 70S ribosome. This chain is Large ribosomal subunit protein uL2, found in Helicobacter hepaticus (strain ATCC 51449 / 3B1).